A 667-amino-acid chain; its full sequence is Threonine--tRNA ligase (667 aa).

Residues 3–64 (DMIRVTLPDG…EEDTNLALVT (62 aa)) enclose the TGS domain. The interval 252-561 (DHRRLGQEMD…LIEHFVGRFP (310 aa)) is catalytic. Residues cysteine 357, histidine 408, and histidine 538 each contribute to the Zn(2+) site.

It belongs to the class-II aminoacyl-tRNA synthetase family. In terms of assembly, homodimer. It depends on Zn(2+) as a cofactor.

The protein localises to the cytoplasm. It carries out the reaction tRNA(Thr) + L-threonine + ATP = L-threonyl-tRNA(Thr) + AMP + diphosphate + H(+). Catalyzes the attachment of threonine to tRNA(Thr) in a two-step reaction: L-threonine is first activated by ATP to form Thr-AMP and then transferred to the acceptor end of tRNA(Thr). Also edits incorrectly charged L-seryl-tRNA(Thr). This Sphingopyxis alaskensis (strain DSM 13593 / LMG 18877 / RB2256) (Sphingomonas alaskensis) protein is Threonine--tRNA ligase.